Reading from the N-terminus, the 465-residue chain is Phytase A (465 aa).

A signal peptide spans 1-26 (MVTLTFLLSAAYLLSGRVSAAPSSAG). An intrachain disulfide couples Cys30 to Cys39. 6 residues coordinate 1D-myo-inositol hexakisphosphate: Gln49, Tyr50, Arg80, His81, Arg84, and Thr87. 4 disulfide bridges follow: Cys70-Cys412, Cys213-Cys463, Cys262-Cys280, and Cys434-Cys442. The active-site Nucleophile is His81. The N-linked (GlcNAc...) asparagine glycan is linked to Asn104. Arg164 is a 1D-myo-inositol hexakisphosphate binding site. Residue Asn205 is glycosylated (N-linked (GlcNAc...) asparagine). Residue Asp209 participates in 1D-myo-inositol hexakisphosphate binding. Asn228 carries N-linked (GlcNAc...) asparagine glycosylation. Lys299 is a 1D-myo-inositol hexakisphosphate binding site. 2 N-linked (GlcNAc...) asparagine glycosylation sites follow: Asn337 and Asn350. The 1D-myo-inositol hexakisphosphate site is built by His359 and Asp360. A glycan (N-linked (GlcNAc...) asparagine) is linked at Asn374.

It belongs to the histidine acid phosphatase family. In terms of assembly, monomer.

The protein resides in the secreted. It carries out the reaction 1D-myo-inositol hexakisphosphate + H2O = 1D-myo-inositol 1,2,4,5,6-pentakisphosphate + phosphate. The enzyme catalyses 1D-myo-inositol 1,2,4,5,6-pentakisphosphate + H2O = 1D-myo-inositol 1,2,5,6-tetrakisphosphate + phosphate. It catalyses the reaction 1D-myo-inositol 1,2,5,6-tetrakisphosphate + H2O = 1D-myo-inositol 1,2,6-trisphosphate + phosphate. The catalysed reaction is 1D-myo-inositol 1,2,6-trisphosphate + H2O = 1D-myo-inositol 1,2-bisphosphate + phosphate. It carries out the reaction 1D-myo-inositol 1,2-bisphosphate + H2O = 1D-myo-inositol 2-phosphate + phosphate. In terms of biological role, catalyzes the phosphate monoester hydrolysis of phytic acid (myo-inositol hexakisphosphate), which results in the stepwise formation of myo-inositol pentakis-, tetrakis-, tris-, bis-, and monophosphates, as well as the liberation of inorganic phosphate. Myo-inositol 2-monophosphate is the end product. Has a broad substrate specificity and is also able to dephosphorylate other classic acid phosphatase substrates such as p-nitrophenyl phosphate, phenyl phosphate, fructose 1,6-bisphosphate, fructose 6-phosphate, glucose 6-phosphate, ribose 5-phosphate, alpha-glycerophosphate, beta-glycerophosphate, 3-phosphoglycerate, phosphoenolpyruvate, as well as ADP and ATP. This Aspergillus fumigatus (strain ATCC MYA-4609 / CBS 101355 / FGSC A1100 / Af293) (Neosartorya fumigata) protein is Phytase A (phyA).